Consider the following 148-residue polypeptide: Receptor activity-modifying protein 3 (148 aa).

An N-terminal signal peptide occupies residues 1-23 (METGALRRPQLLPLLLLLCGGCP). Over 24–113 (RAGGCNETGM…CTVDRVHLED (90 aa)) the chain is Extracellular. Asn-29, Asn-58, Asn-71, and Asn-103 each carry an N-linked (GlcNAc...) asparagine glycan. Disulfide bonds link Cys-40–Cys-72 and Cys-57–Cys-104. A helical transmembrane segment spans residues 114–138 (PPDEVLIPLIVIPVVLTVAMAGLVV). Residues 139-148 (WRSKRTDTLL) are Cytoplasmic-facing.

It belongs to the RAMP family. Heterodimer of CALCRL and RAMP3; interaction induces allosteric modulation of CALCRL function and ligand specificity for adrenomedullin/ADM and intermedin/ADM2. Heterodimer of CALCR and RAMP3; interaction form the receptor complex AMYR3 for amylin/IAPP. Interacts with GPER1. As to expression, strongly expressed in lung, breast, immune system and fetal tissues.

The protein resides in the cell membrane. The protein localises to the membrane. Functionally, accessory protein that interacts with and modulates the function of G-protein coupled receptors including calcitonin gene-related peptide type 1 receptor (CALCRL), calcitonin receptor (CALCR) and G-protein coupled estrogen receptor 1 (GPER1). Required for the transport of CALCRL and GPER1 receptors to the plasma membrane. Plays a role in cardioprotection by reducing cardiac hypertrophy and perivascular fibrosis in a GPER1-dependent manner. Together with CALCRL, form a receptor complex for adrenomedullin/ADM and intermedin/ADM2. Together with CALCR, act as a receptor complex for amylin/IAPP. This Homo sapiens (Human) protein is Receptor activity-modifying protein 3.